The primary structure comprises 392 residues: MALTDFLVEELNGLKQAGLYRPLKELQSPQRPRSIIDGREVINLSSNNYLGLADDPRLKQAMIEATEAYGAGSGAVRTIIGTMTIHNQLEQKLAEFKHVEAAVVFQSGFTCNSGVIPVLVGEGDAVISDELNHASIIDGCRLSKAKIHRYKHADMDDLARVLKETDGQYRRRLIITDGVFSMDGDIAPLPDIVELAEKHGCMTYVDDAHSSGVLGKNGRGSVNHFGLDGRVTVQVGTLSKAVGVLGGYVAGPRALIELLWHKGRPFLFSTSHPPGVAAACLKAIEIMEQEPERIDRLWENTRYFKERLTELGFDTGKSETPITPVIVGDEVKAMQLSDRLLEEGVFAQGIAFPTVPRGKARVRTIVTAAHTKEDLDEALAAFAKVGRELGLI.

Residue Arg-21 coordinates substrate. 108 to 109 (GF) contacts pyridoxal 5'-phosphate. His-133 lines the substrate pocket. Residues Ser-181, 206–209 (DDAH), and 237–240 (TLSK) contribute to the pyridoxal 5'-phosphate site. Lys-240 is subject to N6-(pyridoxal phosphate)lysine. Thr-354 is a binding site for substrate.

The protein belongs to the class-II pyridoxal-phosphate-dependent aminotransferase family. BioF subfamily. Homodimer. Requires pyridoxal 5'-phosphate as cofactor.

The catalysed reaction is 6-carboxyhexanoyl-[ACP] + L-alanine + H(+) = (8S)-8-amino-7-oxononanoate + holo-[ACP] + CO2. The protein operates within cofactor biosynthesis; biotin biosynthesis. Functionally, catalyzes the decarboxylative condensation of pimeloyl-[acyl-carrier protein] and L-alanine to produce 8-amino-7-oxononanoate (AON), [acyl-carrier protein], and carbon dioxide. In Symbiobacterium thermophilum (strain DSM 24528 / JCM 14929 / IAM 14863 / T), this protein is 8-amino-7-oxononanoate synthase.